The primary structure comprises 541 residues: Glutamyl-tRNA(Gln) amidotransferase subunit B, mitochondrial (541 aa).

It belongs to the GatB/GatE family. GatB subfamily. As to quaternary structure, subunit of the heterotrimeric GatFAB amidotransferase (AdT) complex, composed of A, B and F subunits.

It localises to the mitochondrion. It catalyses the reaction L-glutamyl-tRNA(Gln) + L-glutamine + ATP + H2O = L-glutaminyl-tRNA(Gln) + L-glutamate + ADP + phosphate + H(+). In terms of biological role, allows the formation of correctly charged Gln-tRNA(Gln) through the transamidation of misacylated Glu-tRNA(Gln) in the mitochondria. The reaction takes place in the presence of glutamine and ATP through an activated gamma-phospho-Glu-tRNA(Gln). This Saccharomyces cerevisiae (strain RM11-1a) (Baker's yeast) protein is Glutamyl-tRNA(Gln) amidotransferase subunit B, mitochondrial.